Here is a 266-residue protein sequence, read N- to C-terminus: MGQKIHPTGFRLAVSRNWASRWYANNNNFAAMLQEDIGVREYLKKKLKNASVGRVVIERPAKNARITIYSSRPGVVIGKKGEDIEQLKTELQRRMGVPVHVNIEEIRKPETDAQLIADSITQQLERRIMFRRAMKRAMQNAMRLGAQGIKIMSAGRLNGIEIARTEWYREGRVPLHTLRADIDYATSEAKTTYGIIGVKVWVYKGDTLGRNDAPVVEEVAEDKRPRRNARPGDRRPRRDGEGGAPGARRGAPRRGAGKPEDGKTGE.

The KH type-2 domain occupies 39-107 (VREYLKKKLK…PVHVNIEEIR (69 aa)). The tract at residues 218–266 (EVAEDKRPRRNARPGDRRPRRDGEGGAPGARRGAPRRGAGKPEDGKTGE) is disordered. Composition is skewed to basic and acidic residues over residues 230-241 (RPGDRRPRRDGE) and 257-266 (GKPEDGKTGE).

Belongs to the universal ribosomal protein uS3 family. Part of the 30S ribosomal subunit. Forms a tight complex with proteins S10 and S14.

Binds the lower part of the 30S subunit head. Binds mRNA in the 70S ribosome, positioning it for translation. The protein is Small ribosomal subunit protein uS3 of Burkholderia ambifaria (strain MC40-6).